Here is a 494-residue protein sequence, read N- to C-terminus: Glucose-6-phosphate 1-dehydrogenase (494 aa).

Positions 46 and 150 each coordinate NADP(+). 4 residues coordinate substrate: histidine 180, lysine 184, glutamate 218, and aspartate 237. Histidine 242 acts as the Proton acceptor in catalysis. Substrate is bound at residue lysine 342.

This sequence belongs to the glucose-6-phosphate dehydrogenase family.

It catalyses the reaction D-glucose 6-phosphate + NADP(+) = 6-phospho-D-glucono-1,5-lactone + NADPH + H(+). Its pathway is carbohydrate degradation; pentose phosphate pathway; D-ribulose 5-phosphate from D-glucose 6-phosphate (oxidative stage): step 1/3. In terms of biological role, catalyzes the oxidation of glucose 6-phosphate to 6-phosphogluconolactone. This chain is Glucose-6-phosphate 1-dehydrogenase, found in Aggregatibacter actinomycetemcomitans (Actinobacillus actinomycetemcomitans).